A 599-amino-acid chain; its full sequence is Membrane protein insertase YidC (599 aa).

Residues 6-26 (NYFIAIALSVVIVLAWQFLYM) traverse the membrane as a helical segment. The disordered stretch occupies residues 35-78 (RAEEARQAQQQTTQQQPAPGAAPGATVEGAPPASSTQAAATATR). Residues 41–76 (QAQQQTTQQQPAPGAAPGATVEGAPPASSTQAAATA) show a composition bias toward low complexity. A run of 4 helical transmembrane segments spans residues 378–398 (FGVA…PLAS), 448–468 (WPML…YVTI), 501–521 (VPHF…MFLQ), and 536–556 (IFTW…AGLV).

This sequence belongs to the OXA1/ALB3/YidC family. Type 1 subfamily. In terms of assembly, interacts with the Sec translocase complex via SecD. Specifically interacts with transmembrane segments of nascent integral membrane proteins during membrane integration.

The protein localises to the cell inner membrane. In terms of biological role, required for the insertion and/or proper folding and/or complex formation of integral membrane proteins into the membrane. Involved in integration of membrane proteins that insert both dependently and independently of the Sec translocase complex, as well as at least some lipoproteins. Aids folding of multispanning membrane proteins. This Agrobacterium fabrum (strain C58 / ATCC 33970) (Agrobacterium tumefaciens (strain C58)) protein is Membrane protein insertase YidC.